The following is a 271-amino-acid chain: Ribosomal RNA small subunit methyltransferase I (271 aa).

Belongs to the methyltransferase superfamily. RsmI family.

Its subcellular location is the cytoplasm. The enzyme catalyses cytidine(1402) in 16S rRNA + S-adenosyl-L-methionine = 2'-O-methylcytidine(1402) in 16S rRNA + S-adenosyl-L-homocysteine + H(+). Catalyzes the 2'-O-methylation of the ribose of cytidine 1402 (C1402) in 16S rRNA. The sequence is that of Ribosomal RNA small subunit methyltransferase I from Campylobacter fetus subsp. fetus (strain 82-40).